A 532-amino-acid polypeptide reads, in one-letter code: Probable inorganic phosphate transporter 1-9 (532 aa).

Topologically, residues 1-22 (MPELSLLSALDAARIQWYHFKA) are cytoplasmic. Residues 23-43 (IIVAGMGLFTDAYDLFCIAPI) traverse the membrane as a helical segment. At 44-62 (MKMISQIYYHKDSIGTALL) the chain is on the extracellular side. A helical membrane pass occupies residues 63–83 (STSYAIALLGTALGQLIFGYL). Residues 84 to 91 (GDRVGRRK) are Cytoplasmic-facing. Residues 92 to 112 (VYGLSLLIMVFSSFGCGFSVC) form a helical membrane-spanning segment. Residues 113 to 124 (TTRRSCVMVSLG) are Extracellular-facing. The helical transmembrane segment at 125 to 145 (FFRFVLGLGIGGDYPLSATIM) threads the bilayer. Topologically, residues 146 to 154 (SEFANKRTR) are cytoplasmic. A helical membrane pass occupies residues 155–175 (GAFIAAVFSMQGLGILMSSAV). Topologically, residues 176–207 (TMVVCLAFKNAGEGSSEKTNVAGLETLAPPES) are extracellular. A helical membrane pass occupies residues 208–228 (DIAWRLILMIGALPAALTFYW). Residues 229-292 (RMLMPETARY…KLFSRRFLSL (64 aa)) are Cytoplasmic-facing. Residues 293–313 (HGRDLFAASANWFLVDVVFYT) traverse the membrane as a helical segment. Over 314-343 (SNLLLSQIFNFSNKPLNSTNVYDSAFEVAK) the chain is Extracellular. The chain crosses the membrane as a helical span at residues 344–364 (LAAIVAACSTIPGYWFTVYFI). Over 365–371 (DKIGRVK) the chain is Cytoplasmic. Residues 372–392 (IQMMGFFLMAVVYLVAGIPYS) form a helical membrane-spanning segment. At 393 to 406 (WYWSKHEKTNKGFM) the chain is on the extracellular side. The helical transmembrane segment at 407 to 427 (VLYGLIFFFSNFGPNTTTFII) threads the bilayer. Residues 428-441 (PAELFPARFRSTCH) are Cytoplasmic-facing. The helical transmembrane segment at 442-462 (GISGAAGKFGAIVGTVGFLWA) threads the bilayer. At 463-478 (TRHHEEDGFPDVKRVR) the chain is on the extracellular side. The chain crosses the membrane as a helical span at residues 479-499 (IAFLILGGVCIAGMIVTYLFT). The Cytoplasmic portion of the chain corresponds to 500–532 (RETMGRSLEENEDEIVSTSAGSSPANELLRRQY). The disordered stretch occupies residues 509–532 (ENEDEIVSTSAGSSPANELLRRQY). Over residues 515 to 524 (VSTSAGSSPA) the composition is skewed to polar residues.

It belongs to the major facilitator superfamily. Phosphate:H(+) symporter (TC 2.A.1.9) family.

The protein resides in the membrane. Functionally, high-affinity transporter for external inorganic phosphate. This Arabidopsis thaliana (Mouse-ear cress) protein is Probable inorganic phosphate transporter 1-9 (PHT1-9).